The primary structure comprises 139 residues: uncharacterized protein (139 aa).

2 consecutive transmembrane segments (helical) span residues 71–91 (LFSA…ATLL) and 97–117 (ENEL…FVMV).

It belongs to the RseC family.

The protein localises to the cell inner membrane. This is an uncharacterized protein from Haemophilus influenzae (strain ATCC 51907 / DSM 11121 / KW20 / Rd).